Reading from the N-terminus, the 146-residue chain is uncharacterized protein (146 aa).

5 helical membrane-spanning segments follow: residues 5 to 27, 32 to 49, 61 to 80, 90 to 108, and 120 to 142; these read GAMVLLTMLILYAAPSFALYGLA, FVYVGAIMIVAFGVYIIL, LAVMLISALTAIFLAYFFSG, SLGLFAVVAAMLLALARVF, and FFLKWILVVAITFTILSVFMLFL.

It localises to the cell membrane. This is an uncharacterized protein from Archaeoglobus fulgidus (strain ATCC 49558 / DSM 4304 / JCM 9628 / NBRC 100126 / VC-16).